Consider the following 227-residue polypeptide: Ashwin (227 aa).

Positions 71–84 are enriched in basic and acidic residues; the sequence is LPRSRWGKRMEKSR. The disordered stretch occupies residues 71–227; it reads LPRSRWGKRM…KKKIQHITWP (157 aa). The segment covering 88–98 has biased composition (low complexity); the sequence is SSSSTHSSSTD. Positions 153 to 173 are enriched in polar residues; it reads GASTNCSSSNFSNRTPVSSSG. A compositionally biased stretch (low complexity) spans 178–191; sequence SPSNHSNSSVHSNN. Residues 204–219 are compositionally biased toward basic and acidic residues; the sequence is GEPDTAKDIKSPETKK.

The protein belongs to the ashwin family.

The protein resides in the nucleus. This Danio rerio (Zebrafish) protein is Ashwin.